Here is a 555-residue protein sequence, read N- to C-terminus: Phosphomethylpyrimidine synthase (555 aa).

Residues Asn191, Met220, Tyr249, His285, 305–307 (SRG), 346–349 (DGLR), and Glu385 each bind substrate. His389 contacts Zn(2+). Tyr412 lines the substrate pocket. Position 453 (His453) interacts with Zn(2+). 3 residues coordinate [4Fe-4S] cluster: Cys533, Cys536, and Cys541.

It belongs to the ThiC family. As to quaternary structure, homodimer. It depends on [4Fe-4S] cluster as a cofactor.

It carries out the reaction 5-amino-1-(5-phospho-beta-D-ribosyl)imidazole + S-adenosyl-L-methionine = 4-amino-2-methyl-5-(phosphooxymethyl)pyrimidine + CO + 5'-deoxyadenosine + formate + L-methionine + 3 H(+). Its pathway is cofactor biosynthesis; thiamine diphosphate biosynthesis. Catalyzes the synthesis of the hydroxymethylpyrimidine phosphate (HMP-P) moiety of thiamine from aminoimidazole ribotide (AIR) in a radical S-adenosyl-L-methionine (SAM)-dependent reaction. The polypeptide is Phosphomethylpyrimidine synthase (Ehrlichia ruminantium (strain Welgevonden)).